The chain runs to 394 residues: 4-hydroxyphenylpyruvate dioxygenase (394 aa).

VOC domains lie at 27-161 (GYDH…LIER) and 193-351 (HIDH…LFTK). Fe cation contacts are provided by H196, H279, and E362.

The protein belongs to the 4HPPD family. It depends on Fe cation as a cofactor.

The enzyme catalyses 3-(4-hydroxyphenyl)pyruvate + O2 = homogentisate + CO2. It functions in the pathway amino-acid degradation; L-phenylalanine degradation; acetoacetate and fumarate from L-phenylalanine: step 3/6. The sequence is that of 4-hydroxyphenylpyruvate dioxygenase from Yarrowia lipolytica (strain CLIB 122 / E 150) (Yeast).